Here is a 351-residue protein sequence, read N- to C-terminus: F-box protein At1g70590 (351 aa).

Residues 1–60 (MKQRTWPCRSEGSRFSSLSFLKPHDKDKRSRISSINKATAKSTTSSRSSSSSSSSRPPSN) form a disordered region. Polar residues predominate over residues 32 to 41 (ISSINKATAK). Low complexity predominate over residues 42-59 (STTSSRSSSSSSSSRPPS). The region spanning 62–111 (FGDFSMLPYDILMKIAAPFSHPNLQAASLVCKSWRDALKPLRESMLLIRW) is the F-box domain. The stretch at 105–141 (SMLLIRWGKKYKHGRGGVRANLDKALDSFLKGAMRGS) is one Sel1-like repeat. A TPR repeat occupies 142-175 (TLAMVDAGLVYWERGEKEKAVNLYRRASELGDAV).

This chain is F-box protein At1g70590, found in Arabidopsis thaliana (Mouse-ear cress).